Consider the following 244-residue polypeptide: MKPQLSPKAIREIREGTCNPLGAPQVTTDLSENIILTSLDDLHNWARLSSLWPLLYGTACCFIEFAALIGSRFDFDRFGLVPRSSPRQADLLIVAGTVTMKMAPALVRLYEQMPEPKYVIAMGACTITGGMFSADSTTAVRGVDKLIPVDLYLPGCPPRPEAIFDAVIKLRKKVGNESILERTKTEQTHRYITSDHEMNLVFSENTGEYLNKTSANVIPPSKKEKITELPENTEKTEIINSVED.

Residues Cys-60, Cys-61, Cys-125, and Cys-156 each contribute to the [4Fe-4S] cluster site.

It belongs to the complex I 20 kDa subunit family. As to quaternary structure, NDH-1 can be composed of about 15 different subunits; different subcomplexes with different compositions have been identified which probably have different functions. [4Fe-4S] cluster serves as cofactor.

Its subcellular location is the cellular thylakoid membrane. The enzyme catalyses a plastoquinone + NADH + (n+1) H(+)(in) = a plastoquinol + NAD(+) + n H(+)(out). It carries out the reaction a plastoquinone + NADPH + (n+1) H(+)(in) = a plastoquinol + NADP(+) + n H(+)(out). Functionally, NDH-1 shuttles electrons from an unknown electron donor, via FMN and iron-sulfur (Fe-S) centers, to quinones in the respiratory and/or the photosynthetic chain. The immediate electron acceptor for the enzyme in this species is believed to be plastoquinone. Couples the redox reaction to proton translocation, and thus conserves the redox energy in a proton gradient. Cyanobacterial NDH-1 also plays a role in inorganic carbon-concentration. In Prochlorococcus marinus (strain AS9601), this protein is NAD(P)H-quinone oxidoreductase subunit K.